The following is a 325-amino-acid chain: mRNA decay factor CTH1 (325 aa).

2 C3H1-type zinc fingers span residues 204–232 and 242–270; these read LYKT…HGLN and NYRT…HGDD. A disordered region spans residues 284-306; it reads SKDTALTPLPTSLAPSNNDNITN. Polar residues predominate over residues 292-306; that stretch reads LPTSLAPSNNDNITN.

Functionally, binds to specific AU-rich elements (ARE) in the 3'-untranslated region of target mRNAs and promotes their degradation. In response to iron deficiency, promotes the decay of many mRNAs encoding proteins involved in iron-dependent pathways. Negatively regulates primarily iron-dependent mitochondrial processes including respiration and amino acid biosynthesis. The protein is mRNA decay factor CTH1 (CTH1) of Saccharomyces cerevisiae (strain ATCC 204508 / S288c) (Baker's yeast).